The chain runs to 117 residues: Thioredoxin (117 aa).

The region spanning 2-116 is the Thioredoxin domain; it reads AISLTEEDFV…FENIIKDFFG (115 aa). An intrachain disulfide couples cysteine 40 to cysteine 43.

It belongs to the thioredoxin family.

Participates in various redox reactions through the reversible oxidation of its active center dithiol to a disulfide and catalyzes dithiol-disulfide exchange reactions. This chain is Thioredoxin (trxA), found in Borreliella burgdorferi (strain ATCC 35210 / DSM 4680 / CIP 102532 / B31) (Borrelia burgdorferi).